We begin with the raw amino-acid sequence, 437 residues long: Aminopeptidase W (437 aa).

Residues Cys-70, His-361, and Asn-382 contribute to the active site.

Belongs to the peptidase C1 family.

It localises to the cytoplasm. This Lactobacillus delbrueckii subsp. lactis protein is Aminopeptidase W (pepW).